A 159-amino-acid chain; its full sequence is CASP-like protein 1C1 (159 aa).

Residues 1-6 (MAKIKR) are Cytoplasmic-facing. Residues 7–27 (IITTLVRLLVLGAALSATIVM) traverse the membrane as a helical segment. Over 28–50 (VTSHDSAEVLNLSFDAKYTNARA) the chain is Extracellular. N38 carries an N-linked (GlcNAc...) asparagine glycan. The helical transmembrane segment at 51 to 73 (FVYFAITNAIASGYSFIALFLSF) threads the bilayer. The Cytoplasmic segment spans residues 74–86 (STPLWHLVFLLDV). The helical transmembrane segment at 87–107 (FMTLLLTSSISVALAIADVGK) threads the bilayer. The Extracellular segment spans residues 108 to 130 (KGNSHAGWLPVCGQVPEFCDHVT). Residues 131–151 (GALIAGFSAAVLYLVLLLFSI) traverse the membrane as a helical segment. The Cytoplasmic portion of the chain corresponds to 152-159 (HAVLNPKP).

The protein belongs to the Casparian strip membrane proteins (CASP) family. As to quaternary structure, homodimer and heterodimers.

It localises to the cell membrane. The sequence is that of CASP-like protein 1C1 from Vitis vinifera (Grape).